A 128-amino-acid chain; its full sequence is Iron-sulfur cluster insertion protein ErpA (128 aa).

Residues Cys-56, Cys-120, and Cys-122 each contribute to the iron-sulfur cluster site.

This sequence belongs to the HesB/IscA family. Homodimer. The cofactor is iron-sulfur cluster.

Required for insertion of 4Fe-4S clusters for at least IspG. The sequence is that of Iron-sulfur cluster insertion protein ErpA from Xylella fastidiosa (strain M12).